The chain runs to 515 residues: Anthranilate synthase component 1 (515 aa).

L-tryptophan contacts are provided by residues Ser-50 and 281–283 (PYM). Chorismate is bound at residue 316-317 (GT). Glu-343 contributes to the Mg(2+) binding site. Residues Tyr-431, Arg-451, 465 to 467 (GAG), and Gly-467 each bind chorismate. Glu-480 is a Mg(2+) binding site.

This sequence belongs to the anthranilate synthase component I family. In terms of assembly, heterotetramer consisting of two non-identical subunits: a beta subunit (TrpG) and a large alpha subunit (TrpE). The cofactor is Mg(2+).

It catalyses the reaction chorismate + L-glutamine = anthranilate + pyruvate + L-glutamate + H(+). Its pathway is amino-acid biosynthesis; L-tryptophan biosynthesis; L-tryptophan from chorismate: step 1/5. Its activity is regulated as follows. Feedback inhibited by tryptophan. Part of a heterotetrameric complex that catalyzes the two-step biosynthesis of anthranilate, an intermediate in the biosynthesis of L-tryptophan. In the first step, the glutamine-binding beta subunit (TrpG) of anthranilate synthase (AS) provides the glutamine amidotransferase activity which generates ammonia as a substrate that, along with chorismate, is used in the second step, catalyzed by the large alpha subunit of AS (TrpE) to produce anthranilate. In the absence of TrpG, TrpE can synthesize anthranilate directly from chorismate and high concentrations of ammonia. This Bacillus subtilis (strain 168) protein is Anthranilate synthase component 1 (trpE).